Reading from the N-terminus, the 352-residue chain is Photosystem II protein D1 (352 aa).

Position 2 is an N-acetylthreonine (T2). T2 carries the post-translational modification Phosphothreonine. Helical transmembrane passes span 29–46 (YIGW…TATS), 118–133 (HFLL…EWEL), and 142–156 (WIAV…AASA). Position 118 (H118) interacts with chlorophyll a. Residue Y126 coordinates pheophytin a. 2 residues coordinate [CaMn4O5] cluster: D170 and E189. The chain crosses the membrane as a helical span at residues 197–218 (FHMLGVAGVFGGSLFSAMHGSL). H198 provides a ligand contact to chlorophyll a. Residues H215 and 264–265 (SF) contribute to the a quinone site. Residue H215 participates in Fe cation binding. H272 provides a ligand contact to Fe cation. A helical membrane pass occupies residues 274-288 (FLAAWPVIGIWFTAL). Residues H332, E333, D342, and A344 each contribute to the [CaMn4O5] cluster site. Positions 345–352 (STNSSSNN) are excised as a propeptide.

This sequence belongs to the reaction center PufL/M/PsbA/D family. As to quaternary structure, PSII is composed of 1 copy each of membrane proteins PsbA, PsbB, PsbC, PsbD, PsbE, PsbF, PsbH, PsbI, PsbJ, PsbK, PsbL, PsbM, PsbT, PsbX, PsbY, PsbZ, Psb30/Ycf12, at least 3 peripheral proteins of the oxygen-evolving complex and a large number of cofactors. It forms dimeric complexes. It depends on The D1/D2 heterodimer binds P680, chlorophylls that are the primary electron donor of PSII, and subsequent electron acceptors. It shares a non-heme iron and each subunit binds pheophytin, quinone, additional chlorophylls, carotenoids and lipids. D1 provides most of the ligands for the Mn4-Ca-O5 cluster of the oxygen-evolving complex (OEC). There is also a Cl(-1) ion associated with D1 and D2, which is required for oxygen evolution. The PSII complex binds additional chlorophylls, carotenoids and specific lipids. as a cofactor. Post-translationally, tyr-161 forms a radical intermediate that is referred to as redox-active TyrZ, YZ or Y-Z. C-terminally processed by CTPA; processing is essential to allow assembly of the oxygen-evolving complex and thus photosynthetic growth.

It is found in the plastid. Its subcellular location is the chloroplast thylakoid membrane. The catalysed reaction is 2 a plastoquinone + 4 hnu + 2 H2O = 2 a plastoquinol + O2. This is one of the two reaction center proteins of photosystem II. Functionally, photosystem II (PSII) is a light-driven water:plastoquinone oxidoreductase that uses light energy to abstract electrons from H(2)O, generating O(2) and a proton gradient subsequently used for ATP formation. It consists of a core antenna complex that captures photons, and an electron transfer chain that converts photonic excitation into a charge separation. The D1/D2 (PsbA/PsbD) reaction center heterodimer binds P680, the primary electron donor of PSII as well as several subsequent electron acceptors. This is Photosystem II protein D1 from Chlamydomonas reinhardtii (Chlamydomonas smithii).